A 320-amino-acid chain; its full sequence is Retron Ec86 reverse transcriptase (320 aa).

Positions 34 to 248 constitute a Reverse transcriptase domain; the sequence is VETLRLLIYT…SQRKVTGLVI (215 aa). Positions 119, 197, and 198 each coordinate Mg(2+). The segment at 230-320 is necessary and required for recognition and binding of RNA; it reads KKTCISGPRS…GKNPLNKAKT (91 aa).

It belongs to the bacterial reverse transcriptase family.

The enzyme catalyses DNA(n) + a 2'-deoxyribonucleoside 5'-triphosphate = DNA(n+1) + diphosphate. In terms of biological role, reverse transcriptase (RT) component of antiviral defense system retron Ec86, composed of a non-coding RNA (ncRNA), a ribosyltransferase/DNA-binding protein and this RT. Expression of the 3-gene retron confers protection against bacteriophage T5. At multiplicity of infection (MOI) of 0.02 cultures grow normally when infected with T5 without collapsing, at MOI 2 cultures enter growth stasis. Responsible for synthesis of msDNA (a branched molecule with RNA linked by a 2',5'-phosphodiester bond to ssDNA). The retron transcript serves as primer (from a conserved internal G residue) and template for the reaction, and codes for the RT. Recognizes only its cognate RNA as a primer template. Overexpression of the ncRNA and RT (without the ribosyltransferase), which leads to increased levels of msDNA, is mutagenic in vivo. This may be due to a mismatch in the msDNA stem which binds and sequesters MutS and/or MutL. This Escherichia coli protein is Retron Ec86 reverse transcriptase.